A 598-amino-acid polypeptide reads, in one-letter code: Kinetochore-associated protein KNL-2 homolog (598 aa).

The region spanning 19–111 (VVLRDWWLIK…IFGFPPCWER (93 aa)) is the SANTA domain. Basic and acidic residues-rich tracts occupy residues 335 to 344 (AKSSKPEKKG) and 371 to 381 (KSAENKRKIDA). 4 disordered regions span residues 335–403 (AKSS…NNAK), 445–500 (KESL…EEAE), 520–542 (PEKK…QKRS), and 572–598 (KDGS…LKIK). The span at 383 to 392 (KLQSPTSNVA) shows a compositional bias: polar residues. Residues 527-539 (QKTNAASTDSLGQ) show a composition bias toward polar residues. Residues 538–572 (GQKRSRSGRVLVSSLEFWRNQIPVYDMDRNLIQVK) form a required for localization at centromeres region.

The protein belongs to the KNL2 family. Expressed in shoot apical meristem, leaf primordia, basal parts of emerging leaves, inflorescence meristems, young inflorescences, developing flower buds, developing sepals and pistils, styles and young siliques.

Its subcellular location is the nucleus. The protein resides in the nucleoplasm. It is found in the nuclear body. The protein localises to the nucleolus. It localises to the chromosome. Its subcellular location is the centromere. Functionally, involved in recognition of centromeres and centromeric localization of the centromere-specific histone CENH3. Required for normal progression of mitosis and meiosis. May play a role in the determination of the epigenetic status of centromeres. Binds DNA and RNA in vitro. The sequence is that of Kinetochore-associated protein KNL-2 homolog from Arabidopsis thaliana (Mouse-ear cress).